Here is a 251-residue protein sequence, read N- to C-terminus: Octanoyltransferase (251 aa).

Positions 56–237 (ADTGDEIWVV…RLIANLDGES (182 aa)) constitute a BPL/LPL catalytic domain. Substrate is bound by residues 96-103 (RGGQITYH), 168-170 (ALG), and 181-183 (GLS). Residue Cys-199 is the Acyl-thioester intermediate of the active site.

The protein belongs to the LipB family.

It localises to the cytoplasm. The catalysed reaction is octanoyl-[ACP] + L-lysyl-[protein] = N(6)-octanoyl-L-lysyl-[protein] + holo-[ACP] + H(+). It functions in the pathway protein modification; protein lipoylation via endogenous pathway; protein N(6)-(lipoyl)lysine from octanoyl-[acyl-carrier-protein]: step 1/2. Catalyzes the transfer of endogenously produced octanoic acid from octanoyl-acyl-carrier-protein onto the lipoyl domains of lipoate-dependent enzymes. Lipoyl-ACP can also act as a substrate although octanoyl-ACP is likely to be the physiological substrate. This Burkholderia ambifaria (strain MC40-6) protein is Octanoyltransferase.